A 196-amino-acid polypeptide reads, in one-letter code: NADH dehydrogenase [ubiquinone] 1 alpha subcomplex assembly factor 3 (196 aa).

The N-terminal 93 residues, 1 to 93 (MIARTLRTVG…RSVLSWNVNS (93 aa)), are a transit peptide targeting the mitochondrion.

The protein belongs to the NDUFAF3 family. In terms of assembly, together with NdufAF4 associates with mitochondrial complex I assembly intermediates during its biogenesis.

It is found in the mitochondrion. Its function is as follows. Involved in the assembly of mitochondrial NADH:ubiquinone oxidoreductase complex (complex I). Together with NdufAF4, involved in biogenesis of complex 1 modules N, Q and P-peripheral, but not the P-distal module. Required for recruitment of the complex I assembly factor Timmdc1 to complex 1 assembly intermediates. This Drosophila melanogaster (Fruit fly) protein is NADH dehydrogenase [ubiquinone] 1 alpha subcomplex assembly factor 3.